The primary structure comprises 524 residues: Cytokinin dehydrogenase 7 (524 aa).

A signal peptide spans 1-22; the sequence is MAARCSIAFMIMASCLSVVVSG. Residue asparagine 42 is glycosylated (N-linked (GlcNAc...) asparagine). The 179-residue stretch at 55 to 233 folds into the FAD-binding PCMH-type domain; sequence VAAAPEAVLH…TRARIGLMPA (179 aa). Residues glycine 91 and glycine 93 each coordinate FAD. Histidine 94 is modified (pros-8alpha-FAD histidine). Residues serine 95 and glutamine 99 each contribute to the FAD site. Residue asparagine 121 is glycosylated (N-linked (GlcNAc...) asparagine). The FAD site is built by aspartate 157, threonine 162, serine 168, isoleucine 172, and isoleucine 223. N-linked (GlcNAc...) asparagine glycans are attached at residues asparagine 277 and asparagine 320. Positions 472, 507, and 510 each coordinate FAD.

The protein belongs to the oxygen-dependent FAD-linked oxidoreductase family. In terms of assembly, monomer. Requires FAD as cofactor.

It localises to the secreted. It is found in the extracellular space. The catalysed reaction is N(6)-dimethylallyladenine + A + H2O = 3-methyl-2-butenal + adenine + AH2. In terms of biological role, catalyzes the oxidation of cytokinins, a family of N(6)-substituted adenine derivatives that are plant hormones, where the substituent is an isopentenyl group. This chain is Cytokinin dehydrogenase 7 (CKX7), found in Oryza sativa subsp. japonica (Rice).